The primary structure comprises 234 residues: Large ribosomal subunit protein uL1 (234 aa).

Belongs to the universal ribosomal protein uL1 family. As to quaternary structure, part of the 50S ribosomal subunit.

Functionally, binds directly to 23S rRNA. The L1 stalk is quite mobile in the ribosome, and is involved in E site tRNA release. In terms of biological role, protein L1 is also a translational repressor protein, it controls the translation of the L11 operon by binding to its mRNA. The polypeptide is Large ribosomal subunit protein uL1 (Maridesulfovibrio salexigens (strain ATCC 14822 / DSM 2638 / NCIMB 8403 / VKM B-1763) (Desulfovibrio salexigens)).